The following is a 253-amino-acid chain: Claudin domain-containing protein 1 (253 aa).

The helical transmembrane segment at 5–25 threads the bilayer; it reads FATAFVIACVLSLISTIYMAA. 2 N-linked (GlcNAc...) asparagine glycosylation sites follow: Asn42 and Asn72. Helical transmembrane passes span 141-161, 175-195, and 216-236; these read FLLPFVSLGLMCFGALIGLCA, ILHLLAGLCTLGSVSCYVAGI, and FCLACVSAPLQFMAAALFIWA.

It belongs to the PMP-22/EMP/MP20 family. In terms of tissue distribution, in the brain, highly expressed in endothelial cells of the cerebellum compared to other regions (at protein level).

The protein localises to the cell junction. It localises to the tight junction. It is found in the cell membrane. Functionally, plays a role in negatively regulating the permeability of cells to small molecules. This is Claudin domain-containing protein 1 (Cldnd1) from Mus musculus (Mouse).